The sequence spans 102 residues: RNA-binding protein Hfq (102 aa).

Residues 9–68 enclose the Sm domain; the sequence is DPFLNALRRERVPVSIYLVNGIKLQGQIESFDQFVILLKNTVSQMVYKHAISTVVPSRPV. The interval 65–102 is disordered; sequence SRPVSHHSSNTSVGASVGNYHSGGVSAPAAQQESDGTE. A compositionally biased stretch (polar residues) spans 93 to 102; sequence AAQQESDGTE.

It belongs to the Hfq family. As to quaternary structure, homohexamer.

Its function is as follows. RNA chaperone that binds small regulatory RNA (sRNAs) and mRNAs to facilitate mRNA translational regulation in response to envelope stress, environmental stress and changes in metabolite concentrations. Also binds with high specificity to tRNAs. The polypeptide is RNA-binding protein Hfq (Photorhabdus laumondii subsp. laumondii (strain DSM 15139 / CIP 105565 / TT01) (Photorhabdus luminescens subsp. laumondii)).